We begin with the raw amino-acid sequence, 593 residues long: MLLRWHSVIPLFLTMTVALPNTYRTVVEDLPAIPEGWVQGNPPSPETSVRMNLAVGQRNTRTFEQIVLDISTPGHRNYGKHLSRRDLKGLLRPRRETSNLILSWLEESGVPKRSIVDDGDWIHFVISISQAERMLQTRFYYFHDVQDPGISMIRTLKYSVPSRLARHVYMIQPTTKFGKPKKHANSVASLQVIYSSTNATENCNATITPRCLRELYKMGDYVAKPDCRNVIGISGYLDQYARYSDFYKFLELYAPEMKGANFSVAHIGNGQNLQNSTRNSIEASLDIEYALGLSNASAVFYTTSGRGPLVPDLDQPEQEHNSNEPYLDQLHYLLSLPQEALPAVLSTSYGENEQSVPERFSHATCNLFAQLGARGVSVIFSSGDSGVGSSCLTNGKKKITRFNPTFPASCPFVTSVGATFKINPERAIGFSSGGFSDRHSRPVYQNDAVQHYLDKLGDQWKGLYNPKGRGIPDVSAQGANFAIYDHGKVITVSGTSASAPAFAAIIANLNAIRLRANKPVLGYLNPFIYGKGREGFTDIVHGGSKGCVGYSSTNGSTPAVPYASWNATEGWDPVTGVGTPNFRILAKIVQHME.

The signal sequence occupies residues 1–18; it reads MLLRWHSVIPLFLTMTVA. Positions 19–198 are cleaved as a propeptide — removed in mature form; the sequence is LPNTYRTVVE…SLQVIYSSTN (180 aa). 4 N-linked (GlcNAc...) asparagine glycosylation sites follow: asparagine 198, asparagine 204, asparagine 261, and asparagine 275. In terms of domain architecture, Peptidase S53 spans 206 to 592; that stretch reads TITPRCLREL…RILAKIVQHM (387 aa). Residues glutamate 282 and aspartate 286 each act as charge relay system in the active site. A glycan (N-linked (GlcNAc...) asparagine) is linked at asparagine 295. The active-site Charge relay system is the serine 496. Ca(2+) contacts are provided by aspartate 538 and isoleucine 539. 2 N-linked (GlcNAc...) asparagine glycosylation sites follow: asparagine 554 and asparagine 566. Ca(2+)-binding residues include glycine 570 and aspartate 572.

Ca(2+) is required as a cofactor.

The protein resides in the secreted. The protein localises to the extracellular space. It catalyses the reaction Release of an N-terminal tripeptide from a polypeptide.. In terms of biological role, secreted tripeptidyl-peptidase which degrades proteins at acidic pHs and is involved in virulence. In Trichophyton verrucosum (strain HKI 0517), this protein is Probable tripeptidyl-peptidase SED3 (SED3).